We begin with the raw amino-acid sequence, 351 residues long: Nicotinate-nucleotide--dimethylbenzimidazole phosphoribosyltransferase (351 aa).

Glutamate 317 functions as the Proton acceptor in the catalytic mechanism.

This sequence belongs to the CobT family.

The enzyme catalyses 5,6-dimethylbenzimidazole + nicotinate beta-D-ribonucleotide = alpha-ribazole 5'-phosphate + nicotinate + H(+). Its pathway is nucleoside biosynthesis; alpha-ribazole biosynthesis; alpha-ribazole from 5,6-dimethylbenzimidazole: step 1/2. Catalyzes the synthesis of alpha-ribazole-5'-phosphate from nicotinate mononucleotide (NAMN) and 5,6-dimethylbenzimidazole (DMB). This is Nicotinate-nucleotide--dimethylbenzimidazole phosphoribosyltransferase from Pseudomonas aeruginosa (strain LESB58).